Consider the following 808-residue polypeptide: Phospholipase D alpha 1 (808 aa).

Positions 1–125 constitute a C2 domain; sequence MAHYLMHGTL…IRGDQVDRWV (125 aa). Position 186 (aspartate 186) interacts with Ca(2+). Positions 326–364 constitute a PLD phosphodiesterase 1 domain; it reads TMFTHHQKIVVVDGEMPSGESQMRRIVSFVGGIDLCDGR. Residues histidine 331, lysine 333, and aspartate 338 contribute to the active site. Histidine 331 contributes to the a 1,2-diacyl-sn-glycero-3-phosphate binding site. The Ca(2+) site is built by histidine 370 and histidine 404. 2 residues coordinate a 1,2-diacyl-sn-glycero-3-phosphate: glutamine 520 and histidine 659. Residues 654–681 enclose the PLD phosphodiesterase 2 domain; sequence FMIYVHTKMMIVDDEYIIVGSANINQRS. Residues histidine 659, lysine 661, and aspartate 666 contribute to the active site. Glutamate 720 is a binding site for Ca(2+).

It belongs to the phospholipase D family. C2-PLD subfamily. Ca(2+) serves as cofactor.

It catalyses the reaction a 1,2-diacyl-sn-glycero-3-phosphocholine + H2O = a 1,2-diacyl-sn-glycero-3-phosphate + choline + H(+). Functionally, hydrolyzes glycerol-phospholipids at the terminal phosphodiesteric bond. Plays an important role in various cellular processes. The chain is Phospholipase D alpha 1 from Carica papaya (Papaya).